Here is a 430-residue protein sequence, read N- to C-terminus: 3-phosphoshikimate 1-carboxyvinyltransferase (430 aa).

Residues Lys23, Ser24, and Arg28 each coordinate 3-phosphoshikimate. Lys23 lines the phosphoenolpyruvate pocket. Gly95 and Arg123 together coordinate phosphoenolpyruvate. 3-phosphoshikimate contacts are provided by Ser169, Gln171, Asp315, and Lys342. Position 171 (Gln171) interacts with phosphoenolpyruvate. Catalysis depends on Asp315, which acts as the Proton acceptor. Arg346 and Arg388 together coordinate phosphoenolpyruvate.

Belongs to the EPSP synthase family. Monomer.

The protein localises to the cytoplasm. It catalyses the reaction 3-phosphoshikimate + phosphoenolpyruvate = 5-O-(1-carboxyvinyl)-3-phosphoshikimate + phosphate. The protein operates within metabolic intermediate biosynthesis; chorismate biosynthesis; chorismate from D-erythrose 4-phosphate and phosphoenolpyruvate: step 6/7. In terms of biological role, catalyzes the transfer of the enolpyruvyl moiety of phosphoenolpyruvate (PEP) to the 5-hydroxyl of shikimate-3-phosphate (S3P) to produce enolpyruvyl shikimate-3-phosphate and inorganic phosphate. This chain is 3-phosphoshikimate 1-carboxyvinyltransferase, found in Streptococcus pyogenes serotype M6 (strain ATCC BAA-946 / MGAS10394).